A 464-amino-acid polypeptide reads, in one-letter code: Soluble pyridine nucleotide transhydrogenase (464 aa).

35–44 (EASSQVGGSC) contacts FAD.

The protein belongs to the class-I pyridine nucleotide-disulfide oxidoreductase family. FAD is required as a cofactor.

The protein resides in the cytoplasm. It catalyses the reaction NAD(+) + NADPH = NADH + NADP(+). In terms of biological role, conversion of NADPH, generated by peripheral catabolic pathways, to NADH, which can enter the respiratory chain for energy generation. This Marinomonas sp. (strain MWYL1) protein is Soluble pyridine nucleotide transhydrogenase.